The sequence spans 439 residues: Proline--tRNA ligase (439 aa).

It belongs to the class-II aminoacyl-tRNA synthetase family. ProS type 2 subfamily. In terms of assembly, homodimer.

It localises to the cytoplasm. The catalysed reaction is tRNA(Pro) + L-proline + ATP = L-prolyl-tRNA(Pro) + AMP + diphosphate. In terms of biological role, catalyzes the attachment of proline to tRNA(Pro) in a two-step reaction: proline is first activated by ATP to form Pro-AMP and then transferred to the acceptor end of tRNA(Pro). The sequence is that of Proline--tRNA ligase from Rhodopseudomonas palustris (strain BisB5).